We begin with the raw amino-acid sequence, 233 residues long: uncharacterized protein (233 aa).

It belongs to the LutC/YkgG family.

This is an uncharacterized protein from Neisseria meningitidis serogroup B (strain ATCC BAA-335 / MC58).